The sequence spans 1234 residues: Complement factor H (1234 aa).

The N-terminal stretch at 1 to 18 (MRLSARIIWLILWTVCAA) is a signal peptide. Sushi domains lie at 19–82 (EDCK…ICRK), 83–143 (KPCG…LCEV), 144–207 (VKCL…RCVE), 208–264 (ILCT…FCEE), 265–322 (KRCS…RCTL), 324–386 (PCEF…VPCV), 387–444 (RKCV…KCIR), 446–507 (KTCS…SCIK), 508–566 (SCDM…SCYE), 567–624 (RECS…TCKG), 627–685 (ASCA…VCIE), 688–745 (RTCG…KCVA), 750–804 (EKCR…NCTS), 806–863 (TSCP…RCIE), 865–933 (IPCS…RCVG), 934–991 (LPCG…KCIK), 992–1050 (TDCD…VCKD), 1051–1109 (NSCV…KCRD), 1112–1170 (GKCG…TCLH), and 1171–1234 (ACVI…PTCV). Cystine bridges form between C21/C66, C52/C80, C85/C129, C114/C141, C146/C192, C178/C205, C210/C251, C237/C262, C267/C309, C294/C320, C325/C374, C357/C385, C389/C431, C416/C442, C448/C494, C477/C505, C509/C553, C536/C564, C569/C610, C597/C622, C629/C672, C658/C683, C690/C732, C718/C743, C752/C791, C780/C802, C808/C850, C836/C861, C867/C920, C906/C931, C936/C978, C964/C989, C994/C1037, C1023/C1048, C1053/C1096, C1082/C1107, C1114/C1157, C1143/C1168, C1172/C1223, and C1206/C1233. N-linked (GlcNAc...) asparagine glycans are attached at residues N676, N721, N773, and N801. The tract at residues 872-896 (TIEHGSINLPRSSEERRDSIESSSH) is disordered. Residues 883–896 (SSEERRDSIESSSH) show a composition bias toward basic and acidic residues. N-linked (GlcNAc...) asparagine glycosylation is found at N1030 and N1061. The residue at position 1198 (S1198) is a Phosphoserine. N1225 carries an N-linked (GlcNAc...) asparagine glycan.

As to quaternary structure, homodimer. Also forms homooligomers. Interacts with complement protein C3b; this interaction inhibits complement activation. Interacts with complement protein C3d. Interacts with CR3/ITGAM; this interaction mediates adhesion of neutrophils to pathogens leading to pathogen clearance. Post-translationally, sulfated on tyrosine residues. As to expression, CFH is one of the most abundant complement components in blood where the liver is the major source of CFH protein in vivo. in addition, CFH is secreted by additional cell types including monocytes, fibroblasts, or endothelial cells.

Its subcellular location is the secreted. Glycoprotein that plays an essential role in maintaining a well-balanced immune response by modulating complement activation. Acts as a soluble inhibitor of complement, where its binding to self markers such as glycan structures prevents complement activation and amplification on cell surfaces. Accelerates the decay of the complement alternative pathway (AP) C3 convertase C3bBb, thus preventing local formation of more C3b, the central player of the complement amplification loop. As a cofactor of the serine protease factor I, CFH also regulates proteolytic degradation of already-deposited C3b. In addition, mediates several cellular responses through interaction with specific receptors. For example, interacts with CR3/ITGAM receptor and thereby mediates the adhesion of human neutrophils to different pathogens. In turn, these pathogens are phagocytosed and destroyed. This chain is Complement factor H (Cfh), found in Mus musculus (Mouse).